The chain runs to 221 residues: NEDD4 family-interacting protein 1 (221 aa).

Ala2 carries the post-translational modification N-acetylalanine. The interaction with UBE2L3 stretch occupies residues 2–41 (ALALAALAAVEPACGSRYQQLQNEEESGEPEQAAGDAPPP). Topologically, residues 2–116 (ALALAALAAV…ADQLRIGNDG (115 aa)) are cytoplasmic. The interval 18 to 45 (RYQQLQNEEESGEPEQAAGDAPPPYSSI) is disordered. 3 short sequence motifs (PPxY motif) span residues 39-42 (PPPY), 64-67 (PPSY), and 74-76 (PSY). The interval 42-76 (YSSISAESAAYFDYKDESGFPKPPSYNVATTLPSY) is interaction with ITCH. The helical transmembrane segment at 117–137 (IFMLTFFMAFLFNWIGFFLSF) threads the bilayer. Residues 138-143 (CLTTSA) are Extracellular-facing. A helical membrane pass occupies residues 144–164 (AGRYGAISGFGLSLIKWILIV). The Cytoplasmic segment spans residues 165-172 (RFSTYFPG). A helical membrane pass occupies residues 173–193 (YFDGQYWLWWVFLVLGFLLFL). The Extracellular portion of the chain corresponds to 194–221 (RGFINYAKVRKMPETFSNLPRTRVLFIY).

In terms of assembly, forms heterodimers with NDFIP2. Interacts with several E3 ubiquitin-protein ligases, including ITCH, NEDD4, NEDD4L and WWP2. The interaction with NEDD4, NEDD4L and ITCH leads to relocalization of these proteins to exosomes and eventually to exosomal secretion. Interacts with U2SURP. Interacts with SLC11A2/DMT1. Interacts with PTEN. May interact with phosphorylated EGFR. Interacts with BRAT1. Interacts with KCNH2. Interacts with MAVS. Part of a complex containing ITCH, NDFIP1 and MAP3K7. Interacts (via N-terminus) with UBE2L3; the interaction mediates recruitment of UBE2L3 to ITCH. In terms of processing, ubiquitinated by NEDD4 and ITCH; mono-, di- and polyubiquitinated forms are detected. Ubiquitination regulates its degradation. Post-translationally, undergoes transient tyrosine phosphorylation following EGF stimulation, most probably by catalyzed by SRC. Phosphorylation SRC is enhanced in the presence of NDFIP2 which may act as a scaffold to recruit SRC to NDFIP1. Widely expressed. Higher levels are detected in cerebellum, pituitary, thalamus, kidney, liver, testis, salivary glands and placenta. Also expressed in fetal brain, kidney and lung.

The protein resides in the endosome membrane. It is found in the golgi apparatus membrane. It localises to the synapse. The protein localises to the synaptosome. Its subcellular location is the cell projection. The protein resides in the dendrite. It is found in the secreted. Its function is as follows. Activates HECT domain-containing E3 ubiquitin-protein ligases, including NEDD4 and ITCH, and consequently modulates the stability of their targets. As a result, controls many cellular processes. Prevents chronic T-helper cell-mediated inflammation by activating ITCH and thus controlling JUNB degradation. Promotes pancreatic beta cell death through degradation of JUNB and inhibition of the unfolded protein response, leading to reduction of insulin secretion. Restricts the production of pro-inflammatory cytokines in effector Th17 T-cells by promoting ITCH-mediated ubiquitination and degradation of RORC. Together with NDFIP2, limits the cytokine signaling and expansion of effector Th2 T-cells by promoting degradation of JAK1, probably by ITCH- and NEDD4L-mediated ubiquitination. Regulates peripheral T-cell tolerance to self and foreign antigens, forcing the exit of naive CD4+ T-cells from the cell cycle before they become effector T-cells. Negatively regulates RLR-mediated antiviral response by promoting SMURF1-mediated ubiquitination and subsequent degradation of MAVS. Negatively regulates KCNH2 potassium channel activity by decreasing its cell-surface expression and interfering with channel maturation through recruitment of NEDD4L to the Golgi apparatus where it mediates KCNH2 degradation. In cortical neurons, mediates the ubiquitination of the divalent metal transporter SLC11A2/DMT1 by NEDD4L, leading to its down-regulation and protection of the cells from cobalt and iron toxicity. Important for normal development of dendrites and dendritic spines in cortex. Enhances the ubiquitination of BRAT1 mediated by: NEDD4, NEDD4L and ITCH and is required for the nuclear localization of ubiquitinated BRAT1. Enhances the ITCH-mediated ubiquitination of MAP3K7 by recruiting E2 ubiquitin-conjugating enzyme UBE2L3 to ITCH. Modulates EGFR signaling through multiple pathways. In particular, may regulate the ratio of AKT1-to-MAPK8 signaling in response to EGF, acting on AKT1 probably through PTEN destabilization and on MAPK8 through ITCH-dependent MAP2K4 inactivation. As a result, may control cell growth rate. Inhibits cell proliferation by promoting PTEN nuclear localization and changing its signaling specificity. This Homo sapiens (Human) protein is NEDD4 family-interacting protein 1 (NDFIP1).